The chain runs to 327 residues: Tetraacyldisaccharide 4'-kinase (327 aa).

54-61 is a binding site for ATP; it reads TTGGTGKT. The interval 78–106 is disordered; that stretch reads PHILSRGHGGRERGPIGVNPNRSTPRDVG.

Belongs to the LpxK family.

The enzyme catalyses a lipid A disaccharide + ATP = a lipid IVA + ADP + H(+). It functions in the pathway glycolipid biosynthesis; lipid IV(A) biosynthesis; lipid IV(A) from (3R)-3-hydroxytetradecanoyl-[acyl-carrier-protein] and UDP-N-acetyl-alpha-D-glucosamine: step 6/6. In terms of biological role, transfers the gamma-phosphate of ATP to the 4'-position of a tetraacyldisaccharide 1-phosphate intermediate (termed DS-1-P) to form tetraacyldisaccharide 1,4'-bis-phosphate (lipid IVA). In Gluconobacter oxydans (strain 621H) (Gluconobacter suboxydans), this protein is Tetraacyldisaccharide 4'-kinase.